A 530-amino-acid chain; its full sequence is Chondroitin sulfate N-acetylgalactosaminyltransferase 1 (530 aa).

The Cytoplasmic segment spans residues methionine 1–arginine 12. A helical; Signal-anchor for type II membrane protein membrane pass occupies residues valine 13–threonine 33. The Lumenal segment spans residues proline 34 to threonine 530. Positions alanine 57 to serine 93 form a coiled coil. Positions serine 88–glycine 107 are disordered. Residues phenylalanine 91–arginine 105 show a composition bias toward polar residues. Residues asparagine 313 and asparagine 322 are each glycosylated (N-linked (GlcNAc...) asparagine). 2 residues coordinate a divalent metal cation: aspartate 358 and histidine 475.

This sequence belongs to the chondroitin N-acetylgalactosaminyltransferase family.

The protein localises to the golgi apparatus. It localises to the golgi stack membrane. It catalyses the reaction 3-O-(beta-D-GlcA-(1-&gt;3)-beta-D-Gal-(1-&gt;3)-beta-D-Gal-(1-&gt;4)-beta-D-Xyl)-L-seryl-[protein] + UDP-N-acetyl-alpha-D-galactosamine = 3-O-(beta-D-GalNAc-(1-&gt;4)-beta-D-GlcA-(1-&gt;3)-beta-D-Gal-(1-&gt;3)-beta-D-Gal-(1-&gt;4)-beta-D-Xyl)-L-seryl-[protein] + UDP + H(+). Transfers 1,4-N-acetylgalactosamine (GalNAc) from UDP-GalNAc to the non-reducing end of glucuronic acid (GlcUA). Required for addition of the first GalNAc to the core tetrasaccharide linker and for elongation of chondroitin chains. Important role in chondroitin chain biosynthesis in cartilage formation, and subsequent endochondral ossification. Moreover, is involved in the metabolism of aggrecan. In Mus musculus (Mouse), this protein is Chondroitin sulfate N-acetylgalactosaminyltransferase 1.